The chain runs to 221 residues: MDSEAAGVALLSREQIIRILSEVPAGFIKPTDPPAPSLAPFKKLGVLVDIDDILGEQDAAAARIRDNIDKEQSYSCVECRKMLPTAHLLDLHITEQHDCYFAASVERGDKPMFSCFLEECTIKFHTARQRKDHCIITHKLPANYRFDHSKNRGKQKHQGKSKPNSMEVDEVIEETKSLPYVKAFSFGHQTQRSFYTGKDQRSGKTLDDVQAMKEAINDILD.

2 consecutive C2H2-type zinc fingers follow at residues 74 to 97 (YSCV…TEQH) and 113 to 138 (FSCF…IITH). Residues 146–168 (FDHSKNRGKQKHQGKSKPNSMEV) form a disordered region. Positions 151–160 (NRGKQKHQGK) are enriched in basic residues.

Functionally, vital for development. This chain is Protein lethal(2)k10201 (l(2)k10201), found in Drosophila melanogaster (Fruit fly).